Consider the following 636-residue polypeptide: Topoisomerase I damage affected protein 7 (636 aa).

The span at 1–18 shows a compositional bias: polar residues; the sequence is MNSNSTIGRTTLGESDTI. Disordered stretches follow at residues 1–33, 87–109, 238–271, 299–326, and 339–362; these read MNSN…NSRS, TLVS…QYDP, ISSP…SSTN, PTSS…DDTT, and QSTT…STSP. Asn4 carries N-linked (GlcNAc...) asparagine glycosylation. Composition is skewed to low complexity over residues 19-33 and 87-108; these read SLSF…NSRS and TLVS…SQYD. Residue Asn257 is glycosylated (N-linked (GlcNAc...) asparagine). A helical transmembrane segment spans residues 457–477; sequence IVGSVVGSVGGILICVLVVWF. Asn492 carries an N-linked (GlcNAc...) asparagine glycan. A compositionally biased stretch (polar residues) spans 510–541; the sequence is QAKEASLQAQDSGSQQRNTETASANNPFSNEF. Positions 510–551 are disordered; it reads QAKEASLQAQDSGSQQRNTETASANNPFSNEFNFKARGNPPP. Lys512 participates in a covalent cross-link: Glycyl lysine isopeptide (Lys-Gly) (interchain with G-Cter in ubiquitin). N-linked (GlcNAc...) asparagine glycans are attached at residues Asn557, Asn562, and Asn626. Residue Ser628 is modified to Phosphoserine.

This sequence belongs to the TDA7 family.

The protein resides in the vacuole membrane. This Saccharomyces cerevisiae (strain YJM789) (Baker's yeast) protein is Topoisomerase I damage affected protein 7 (TDA7).